The sequence spans 442 residues: MQPPPSLCGRALVALVLACGLSRIWGEERGFPPDRATPLLQTAEIMTPPTKTLWPKGSNASLARSLAPAEVPKGDRTAGSPPRTISPPPCEGSIEIKETFKYINTVVSCLVFVLGIIGNSTLLRIIYKNKCMRNGPNILIASLALGDLLHIIIDIPITVYKLLAEDWPFGVEMCKLVPFIQKASVGITVLSLCALSIDRYRAVASWSRIKGIGVPKWTAVEIVLIWVVSVVLAVPEAVGFDMITIDYKGRYLRICLLHPTQKTAFMQFYKTAKDWWLFSFYFCLPLAITAFFYTLMTCEMLRKKSGMQIALNDHLKQRREVAKTVFCLVLVFALCWLPLHLSRILKLTIYDQNDPNRCELLSFLLVLDYIGINMASLNSCINPIALYLVSKRFKNCFKSCLCCWCQSFEEKQSLEEKQSCLKFKANDHGYDNFRSSNKYSSS.

Residues 1-26 (MQPPPSLCGRALVALVLACGLSRIWG) form the signal peptide. Topologically, residues 27–101 (EERGFPPDRA…GSIEIKETFK (75 aa)) are extracellular. N-linked (GlcNAc...) asparagine glycosylation is present at Asn59. The interval 69-88 (AEVPKGDRTAGSPPRTISPP) is disordered. Residues 102–126 (YINTVVSCLVFVLGIIGNSTLLRII) traverse the membrane as a helical segment. Residues 127–137 (YKNKCMRNGPN) lie on the Cytoplasmic side of the membrane. The chain crosses the membrane as a helical span at residues 138–163 (ILIASLALGDLLHIIIDIPITVYKLL). Topologically, residues 164 to 175 (AEDWPFGVEMCK) are extracellular. Cys174 and Cys255 form a disulfide bridge. Residues 176–197 (LVPFIQKASVGITVLSLCALSI) form a helical membrane-spanning segment. Over 198–218 (DRYRAVASWSRIKGIGVPKWT) the chain is Cytoplasmic. A helical membrane pass occupies residues 219–243 (AVEIVLIWVVSVVLAVPEAVGFDMI). At 244–271 (TIDYKGRYLRICLLHPTQKTAFMQFYKT) the chain is on the extracellular side. Residues 272–296 (AKDWWLFSFYFCLPLAITAFFYTLM) form a helical membrane-spanning segment. Over 297–324 (TCEMLRKKSGMQIALNDHLKQRREVAKT) the chain is Cytoplasmic. At Ser305 the chain carries Phosphoserine. The chain crosses the membrane as a helical span at residues 325-350 (VFCLVLVFALCWLPLHLSRILKLTIY). Residues 351–362 (DQNDPNRCELLS) are Extracellular-facing. The chain crosses the membrane as a helical span at residues 363-389 (FLLVLDYIGINMASLNSCINPIALYLV). Over 390–442 (SKRFKNCFKSCLCCWCQSFEEKQSLEEKQSCLKFKANDHGYDNFRSSNKYSSS) the chain is Cytoplasmic. S-palmitoyl cysteine attachment occurs at residues Cys402, Cys403, and Cys405. Ser419 carries the post-translational modification Phosphoserine. The residue at position 439 (Tyr439) is a Phosphotyrosine. Ser440, Ser441, and Ser442 each carry phosphoserine.

Belongs to the G-protein coupled receptor 1 family. Endothelin receptor subfamily. EDNRB sub-subfamily.

The protein localises to the cell membrane. Its function is as follows. Non-specific receptor for endothelin 1, 2, and 3. Mediates its action by association with G proteins that activate a phosphatidylinositol-calcium second messenger system. In Canis lupus familiaris (Dog), this protein is Endothelin receptor type B (EDNRB).